The sequence spans 239 residues: Probable methylthioribulose-1-phosphate dehydratase (239 aa).

Residue C100 participates in substrate binding. The Zn(2+) site is built by H118 and H120. The Proton donor/acceptor role is filled by E141. H197 contacts Zn(2+).

It belongs to the aldolase class II family. MtnB subfamily. The cofactor is Zn(2+).

Its subcellular location is the cytoplasm. It catalyses the reaction 5-(methylsulfanyl)-D-ribulose 1-phosphate = 5-methylsulfanyl-2,3-dioxopentyl phosphate + H2O. The protein operates within amino-acid biosynthesis; L-methionine biosynthesis via salvage pathway; L-methionine from S-methyl-5-thio-alpha-D-ribose 1-phosphate: step 2/6. Its function is as follows. Catalyzes the dehydration of methylthioribulose-1-phosphate (MTRu-1-P) into 2,3-diketo-5-methylthiopentyl-1-phosphate (DK-MTP-1-P). The chain is Probable methylthioribulose-1-phosphate dehydratase from Leishmania major.